The primary structure comprises 106 residues: Protein translation factor SUI1 homolog (106 aa).

This sequence belongs to the SUI1 family.

Additional factor that functions in concert with eIF-2 and the initiator tRNA in directing the ribosome to the proper start site of translation. This chain is Protein translation factor SUI1 homolog, found in Acanthamoeba polyphaga mimivirus (APMV).